A 250-amino-acid polypeptide reads, in one-letter code: Phosphonates import ATP-binding protein PhnC (250 aa).

The ABC transporter domain maps to 2-247 (ILFNNVNKVW…KLDAQAMKKI (246 aa)). 35–42 (GLSGAGKT) lines the ATP pocket.

This sequence belongs to the ABC transporter superfamily. Phosphonates importer (TC 3.A.1.9.1) family. As to quaternary structure, the complex is composed of two ATP-binding proteins (PhnC), two transmembrane proteins (PhnE) and a solute-binding protein (PhnD).

The protein resides in the cell membrane. It catalyses the reaction phosphonate(out) + ATP + H2O = phosphonate(in) + ADP + phosphate + H(+). Its function is as follows. Part of the ABC transporter complex PhnCDE involved in phosphonates import. Responsible for energy coupling to the transport system. In Mycoplasma capricolum subsp. capricolum (strain California kid / ATCC 27343 / NCTC 10154), this protein is Phosphonates import ATP-binding protein PhnC.